We begin with the raw amino-acid sequence, 645 residues long: Translation factor GUF1, mitochondrial (645 aa).

The 185-residue stretch at 44-228 (ENYRNFSIVA…AIIDRIPPPT (185 aa)) folds into the tr-type G domain. Residues 53–60 (AHVDHGKS), 120–124 (DTPGH), and 174–177 (NKID) each bind GTP.

This sequence belongs to the TRAFAC class translation factor GTPase superfamily. Classic translation factor GTPase family. LepA subfamily.

Its subcellular location is the mitochondrion inner membrane. The enzyme catalyses GTP + H2O = GDP + phosphate + H(+). In terms of biological role, promotes mitochondrial protein synthesis. May act as a fidelity factor of the translation reaction, by catalyzing a one-codon backward translocation of tRNAs on improperly translocated ribosomes. Binds to mitochondrial ribosomes in a GTP-dependent manner. The sequence is that of Translation factor GUF1, mitochondrial from Saccharomyces cerevisiae (strain RM11-1a) (Baker's yeast).